Consider the following 879-residue polypeptide: Pyruvate dehydrogenase phosphatase regulatory subunit, mitochondrial (879 aa).

Residues 1-27 (MMFYRLLSIVGRQRASPGWQNWSSARN) constitute a mitochondrion transit peptide.

It belongs to the GcvT family. As to quaternary structure, heterodimer of a catalytic (PDP1) and a regulatory (PDPR) subunit.

It is found in the mitochondrion matrix. Its function is as follows. Decreases the sensitivity of PDP1 to magnesium ions, and this inhibition is reversed by the polyamine spermine. The polypeptide is Pyruvate dehydrogenase phosphatase regulatory subunit, mitochondrial (PDPR) (Homo sapiens (Human)).